A 261-amino-acid polypeptide reads, in one-letter code: Uridine-cytidine kinase 2 (261 aa).

Residues 1-16 (MAGDSEQTLQNHQQPN) are compositionally biased toward polar residues. Positions 1-24 (MAGDSEQTLQNHQQPNGGEPFLIG) are disordered. N-acetylalanine is present on alanine 2. 27-35 (GGTASGKSS) is an ATP binding site. Substrate contacts are provided by aspartate 84, tyrosine 112, histidine 117, arginine 166, arginine 176, and glutamine 184. Aspartate 213 serves as a coordination point for ATP. The tract at residues 240 to 261 (GYLNGYTPSRKRQASESSSRPH) is disordered. Serine 254 is modified (phosphoserine).

It belongs to the uridine kinase family. As to quaternary structure, homotetramer.

It catalyses the reaction uridine + ATP = UMP + ADP + H(+). The catalysed reaction is cytidine + ATP = CMP + ADP + H(+). Its pathway is pyrimidine metabolism; CTP biosynthesis via salvage pathway; CTP from cytidine: step 1/3. It functions in the pathway pyrimidine metabolism; UMP biosynthesis via salvage pathway; UMP from uridine: step 1/1. Functionally, phosphorylates uridine and cytidine to uridine monophosphate and cytidine monophosphate. Does not phosphorylate deoxyribonucleosides or purine ribonucleosides. Can use ATP or GTP as a phosphate donor. In Mus musculus (Mouse), this protein is Uridine-cytidine kinase 2 (Uck2).